The primary structure comprises 458 residues: Mitochondrial distribution and morphology protein 10 (458 aa).

Residues 307 to 339 are disordered; sequence LDQRRTEPLDAPNTNSSVFSKERVQKKQGPKED. Residues 326-339 are compositionally biased toward basic and acidic residues; sequence SKERVQKKQGPKED.

Belongs to the MDM10 family. As to quaternary structure, component of the ER-mitochondria encounter structure (ERMES) or MDM complex, composed of MMM1, MDM10, MDM12 and MDM34. Associates with the mitochondrial outer membrane sorting assembly machinery SAM(core) complex.

The protein resides in the mitochondrion outer membrane. Its function is as follows. Component of the ERMES/MDM complex, which serves as a molecular tether to connect the endoplasmic reticulum and mitochondria. Components of this complex are involved in the control of mitochondrial shape and protein biogenesis and may function in phospholipid exchange. MDM10 is involved in the late assembly steps of the general translocase of the mitochondrial outer membrane (TOM complex). Functions in the TOM40-specific route of the assembly of outer membrane beta-barrel proteins, including the association of TOM40 with the receptor TOM22 and small TOM proteins. Can associate with the SAM(core) complex as well as the MDM12-MMM1 complex, both involved in late steps of the major beta-barrel assembly pathway, that is responsible for biogenesis of all outer membrane beta-barrel proteins. May act as a switch that shuttles between both complexes and channels precursor proteins into the TOM40-specific pathway. Plays a role in mitochondrial morphology and in the inheritance of mitochondria. In Lachancea thermotolerans (strain ATCC 56472 / CBS 6340 / NRRL Y-8284) (Yeast), this protein is Mitochondrial distribution and morphology protein 10.